We begin with the raw amino-acid sequence, 279 residues long: Putative pyruvate, phosphate dikinase regulatory protein (279 aa).

153–160 (GVSRTSKT) is a binding site for ADP.

The protein belongs to the pyruvate, phosphate/water dikinase regulatory protein family. PDRP subfamily.

The enzyme catalyses N(tele)-phospho-L-histidyl/L-threonyl-[pyruvate, phosphate dikinase] + ADP = N(tele)-phospho-L-histidyl/O-phospho-L-threonyl-[pyruvate, phosphate dikinase] + AMP + H(+). It carries out the reaction N(tele)-phospho-L-histidyl/O-phospho-L-threonyl-[pyruvate, phosphate dikinase] + phosphate + H(+) = N(tele)-phospho-L-histidyl/L-threonyl-[pyruvate, phosphate dikinase] + diphosphate. In terms of biological role, bifunctional serine/threonine kinase and phosphorylase involved in the regulation of the pyruvate, phosphate dikinase (PPDK) by catalyzing its phosphorylation/dephosphorylation. This chain is Putative pyruvate, phosphate dikinase regulatory protein, found in Rhodopseudomonas palustris (strain ATCC BAA-98 / CGA009).